Here is a 429-residue protein sequence, read N- to C-terminus: Probable E3 ubiquitin-protein ligase makorin-1 (429 aa).

3 C3H1-type zinc fingers span residues 18–45, 48–75, and 153–180; these read WTKH…HDLT, KPAA…HCKP, and ELRK…HGDV. The segment at 181 to 208 is makorin-type Cys-His; it reads CDMCGLQVLHPTDSSQRSEHTKACIEAH. Residues 226–280 form an RING-type zinc finger; the sequence is CGVCMEVVFEKANPSERRFGILSNCSHCYCLKCIRKWRSAKQFESKIIKSCPECR. The segment at 309-338 adopts a C3H1-type 4 zinc-finger fold; that stretch reads GMGRKPCRYFDEGRGICPFGANCFYKHAFP. Residues 343-362 are disordered; sequence EEAQPQRRQTGSSSRNRNSR. Residues 348–358 are compositionally biased toward low complexity; it reads QRRQTGSSSRN.

It catalyses the reaction S-ubiquitinyl-[E2 ubiquitin-conjugating enzyme]-L-cysteine + [acceptor protein]-L-lysine = [E2 ubiquitin-conjugating enzyme]-L-cysteine + N(6)-ubiquitinyl-[acceptor protein]-L-lysine.. It functions in the pathway protein modification; protein ubiquitination. Its function is as follows. E3 ubiquitin ligase catalyzing the covalent attachment of ubiquitin moieties onto substrate proteins. In Takifugu rubripes (Japanese pufferfish), this protein is Probable E3 ubiquitin-protein ligase makorin-1.